Consider the following 521-residue polypeptide: Amidase 1 (521 aa).

Residues Lys-112 and Ser-187 each act as charge relay system in the active site. Residues Ser-187 and 208–211 each bind substrate; that span reads IGGS. Ser-211 serves as the catalytic Acyl-ester intermediate.

This sequence belongs to the amidase family.

The catalysed reaction is a monocarboxylic acid amide + H2O = a monocarboxylate + NH4(+). The protein operates within xenobiotic degradation. In terms of biological role, amidase; part of the Fusarium detoxification of benzoxazolinone cluster 1 (FDB1) involved in the degradation of benzoxazolinones produced by the host plant. Maize, wheat, and rye produce the 2 benzoxazinone phytoanticipins 2,4-dihy-droxy-7-methoxy-1,4-benzoxazin-3-one (DIMBOA) and 2,4-dihydroxy-1,4-benzoxazin-3-one (DIBOA) that, due to their inherent instability once released, spontaneously degrade to the more stable corresponding benzoxazolinones, 6-methoxy-2-benzoxazolinone (MBOA) and 2-benzoxazolinone (BOA), respectively. The first step in the detoxification of benzoxazolinones involves the hydrolysis of the cyclic ester bond of benzoxazolinones by the FDB1 cluster gamma-lactamase MBL1 to aminophenols. MBL1 is able to convert BOA into 2-aminophenol (2-AP), as well as MBOA into 5-methoxy-2-aminophenol (2-AMP). The FDB2 cluster N-malonyltransferase FDB2/NAT1 then metabolizes aminophenols via N-malonylation to non-toxic malonamic acids. FDB2/NAT1 converts 2-AP into N-(2-hydroxyphenyl) malonamic acid (HPMA) and 2-AMP into N-(2-hydroxy-4-methoxyphenyl) malonamic acid (HMPMA). The duplicated dienlactone hydrolases DLH1 and DLH2 may provide redundant function for hydrolyzing the lactone moiety in the BOA molecule. The roles of the amidases an other enzymes encoded by the 2 FDB clusters have not been identified so far. The sequence is that of Amidase 1 from Gibberella moniliformis (strain M3125 / FGSC 7600) (Maize ear and stalk rot fungus).